A 417-amino-acid polypeptide reads, in one-letter code: Gap junction alpha-3 protein (417 aa).

An intramembrane segment occupies 2-15; that stretch reads GDWSFLGRLLENAQ. The Cytoplasmic segment spans residues 16–19; it reads EHST. The helical transmembrane segment at 20–40 threads the bilayer; the sequence is VIGKVWLTVLFIFRILVLGAA. The Extracellular segment spans residues 41–71; the sequence is AEEVWGDEQSDFTCNTQQPGCENVCYDRAFP. 3 disulfide bridges follow: Cys54/Cys198, Cys61/Cys192, and Cys65/Cys187. Residues 72–92 traverse the membrane as a helical segment; it reads ISHIRFWALQIIFVSTPTLIY. Over 93–158 the chain is Cytoplasmic; that stretch reads LGHVLHIVRM…GALLRTYVFN (66 aa). The span at 110-128 shows a compositional bias: basic and acidic residues; the sequence is EEELLRRDNPQHGRGREPM. The tract at residues 110 to 141 is disordered; that stretch reads EEELLRRDNPQHGRGREPMRTGSPRDPPLRDD. Residues 159 to 179 traverse the membrane as a helical segment; it reads IIFKTLFEVGFIAGQYFLYGF. Topologically, residues 180–207 are extracellular; the sequence is QLQPLYRCDRWPCPNTVDCFISRPTEKT. Residues 208–228 form a helical membrane-spanning segment; that stretch reads IFVIFMLAVACASLVLNMLEI. Over 229–417 the chain is Cytoplasmic; the sequence is YHLGWKKLKQ…GRARPGDLAI (189 aa). Disordered stretches follow at residues 247–267 and 334–417; these read DASEARHKPLDPLPTATSSGP and RQVA…DLAI. Low complexity predominate over residues 342-353; it reads PASKPSSAASSP.

It belongs to the connexin family. Alpha-type (group II) subfamily. As to quaternary structure, a hemichannel or connexon is composed of a hexamer of connexins. A functional gap junction is formed by the apposition of two hemichannels. Forms heteromeric channels with GJA8.

It is found in the cell membrane. The protein resides in the cell junction. The protein localises to the gap junction. In terms of biological role, structural component of lens fiber gap junctions. Gap junctions are dodecameric channels that connect the cytoplasm of adjoining cells. They are formed by the docking of two hexameric hemichannels, one from each cell membrane. Small molecules and ions diffuse from one cell to a neighboring cell via the central pore. This is Gap junction alpha-3 protein (Gja3) from Mus musculus (Mouse).